Here is a 209-residue protein sequence, read N- to C-terminus: Ribonuclease HII (209 aa).

An RNase H type-2 domain is found at 19–209; the sequence is CTIVGVDEVG…ASGITKLYNK (191 aa). A divalent metal cation is bound by residues Asp25, Glu26, and Asp118.

This sequence belongs to the RNase HII family. Requires Mn(2+) as cofactor. Mg(2+) is required as a cofactor.

The protein localises to the cytoplasm. The enzyme catalyses Endonucleolytic cleavage to 5'-phosphomonoester.. Its function is as follows. Endonuclease that specifically degrades the RNA of RNA-DNA hybrids. This chain is Ribonuclease HII, found in Ehrlichia chaffeensis (strain ATCC CRL-10679 / Arkansas).